A 1972-amino-acid polypeptide reads, in one-letter code: TP53-binding protein 1 (1972 aa).

Disordered regions lie at residues 24–273 (DSQP…VAAM), 290–332 (QIQK…CSLA), and 346–507 (GQRS…LGLS). Residues Ser-25 and Ser-63 each carry the phosphoserine modification. The span at 82-91 (EHLKENKVAD) shows a compositional bias: basic and acidic residues. The span at 94–121 (DSSNLDTCGSISQVIEQLPQPNRTSSVL) shows a compositional bias: polar residues. Phosphoserine is present on residues Ser-105 and Ser-124. Over residues 138–149 (ELEQKEKEKEED) the composition is skewed to basic and acidic residues. Polar residues predominate over residues 151-168 (SGNTTHSLGAEDTASSQL). Ser-166, Ser-176, and Ser-178 each carry phosphoserine. Positions 195–205 (LQSVTTNSGYT) are enriched in polar residues. A Glycyl lysine isopeptide (Lys-Gly) (interchain with G-Cter in SUMO1); alternate cross-link involves residue Lys-217. Lys-217 participates in a covalent cross-link: Glycyl lysine isopeptide (Lys-Gly) (interchain with G-Cter in SUMO2); alternate. 3 positions are modified to phosphoserine: Ser-222, Ser-265, and Ser-294. Composition is skewed to polar residues over residues 300-322 (LSTQEDLFDQSNKTVSSDGCSTP) and 346-361 (GQRSLVQDSLSTNSSD). Thr-302 carries the phosphothreonine modification. A phosphoserine mark is found at Ser-366, Ser-380, Ser-395, Ser-398, Ser-429, Ser-452, and Ser-464. Over residues 426–441 (STVSPQASTPISQSTP) the composition is skewed to polar residues. Pro residues predominate over residues 442–452 (VFPPGSLPIPS). A compositionally biased stretch (polar residues) spans 481–490 (HSSSLTVECS). Over residues 491-501 (KTSEIEPKNSP) the composition is skewed to basic and acidic residues. Phosphoserine is present on residues Ser-500, Ser-507, Ser-518, Ser-523, and Ser-525. Positions 520–531 (SEYSQSPKMESL) are enriched in polar residues. The disordered stretch occupies residues 520 to 556 (SEYSQSPKMESLSSHRIDEDGENTQIEDTEPMSPVLN). Residues 538 to 549 (EDGENTQIEDTE) show a composition bias toward acidic residues. Thr-543 and Thr-548 each carry phosphothreonine. A phosphoserine mark is found at Ser-552, Ser-566, and Ser-580. Residues 568-595 (LMNPAQDGEVQLSQNDDKTKGDDTDTRD) are disordered. A compositionally biased stretch (basic and acidic residues) spans 582 to 595 (NDDKTKGDDTDTRD). Ser-630, Ser-635, Ser-639, and Ser-640 each carry phosphoserine. Residues 649–687 (EIKEHHPEEGSSGSEVEEIPETPCESQGEELKEENMESV) form a disordered region. Thr-670 carries the post-translational modification Phosphothreonine. Phosphoserine occurs at positions 692, 724, 727, 771, 809, 830, 831, and 834. Residues 742-911 (EQEAWEEATS…TPFHFTLPKE (170 aa)) form a disordered region. The span at 798 to 816 (AENRLDTKEEKSVEYEGDL) shows a compositional bias: basic and acidic residues. Over residues 839–848 (RADDPLRLDQ) the composition is skewed to basic and acidic residues. Positions 849–864 (ELQQPQTQEKTSNSLT) are enriched in polar residues. Position 855 is a phosphothreonine (Thr-855). Lys-868 is covalently cross-linked (Glycyl lysine isopeptide (Lys-Gly) (interchain with G-Cter in SUMO1); alternate). Lys-868 participates in a covalent cross-link: Glycyl lysine isopeptide (Lys-Gly) (interchain with G-Cter in SUMO2); alternate. Positions 890–902 (HASQSFCESSSET) are enriched in polar residues. Position 922 is a phosphothreonine (Thr-922). Residue Lys-930 forms a Glycyl lysine isopeptide (Lys-Gly) (interchain with G-Cter in SUMO2) linkage. A phosphoserine mark is found at Ser-970 and Ser-975. Lys-984 participates in a covalent cross-link: Glycyl lysine isopeptide (Lys-Gly) (interchain with G-Cter in SUMO2). 2 disordered regions span residues 997–1028 (EASEESLQFNLEKPATGERKNGSTAVAESVAS) and 1045–1103 (ENEA…VSPA). Over residues 1018 to 1028 (GSTAVAESVAS) the composition is skewed to polar residues. A Phosphoserine modification is found at Ser-1028. The residue at position 1056 (Thr-1056) is a Phosphothreonine. The residue at position 1068 (Ser-1068) is a Phosphoserine. Basic and acidic residues predominate over residues 1071 to 1083 (EEEKEKLEGDHTI). Residues Ser-1086, Ser-1094, Ser-1101, and Ser-1114 each carry the phosphoserine modification. Residues 1127-1139 (DQKEGRSTNKENP) are compositionally biased toward basic and acidic residues. 3 disordered regions span residues 1127-1148 (DQKEGRSTNKENPSKALIERPS), 1188-1232 (NFGK…QPPH), and 1269-1478 (VTEE…DGLD). Ser-1148 bears the Phosphoserine mark. Residues 1188-1200 (NFGKQDATVQTER) are compositionally biased toward polar residues. Thr-1214 carries the post-translational modification Phosphothreonine. Phosphoserine occurs at positions 1216 and 1219. Over residues 1272–1285 (ETEEPIVECQECET) the composition is skewed to acidic residues. 2 stretches are compositionally biased toward low complexity: residues 1298–1307 (DLGDISSFSS) and 1316–1329 (SSGTSLSAMHSSGS). Phosphoserine occurs at positions 1317 and 1342. Arg-1355 carries the omega-N-methylarginine modification. The residue at position 1362 (Ser-1362) is a Phosphoserine. Lys-1365 participates in a covalent cross-link: Glycyl lysine isopeptide (Lys-Gly) (interchain with G-Cter in SUMO2). The residue at position 1368 (Ser-1368) is a Phosphoserine. Phosphothreonine is present on Thr-1372. The GAR motif lies at 1396–1403 (RGRGRRGR). Phosphoserine is present on residues Ser-1426 and Ser-1430. Residue Lys-1434 forms a Glycyl lysine isopeptide (Lys-Gly) (interchain with G-Cter in SUMO1); alternate linkage. Lys-1434 is covalently cross-linked (Glycyl lysine isopeptide (Lys-Gly) (interchain with G-Cter in SUMO2); alternate). Residues Ser-1460, Ser-1462, and Ser-1474 each carry the phosphoserine modification. The interval 1484 to 1603 (NSFVGLRVVA…NRLREQYGLG (120 aa)) is tudor-like. Positions 1495–1523 (WSSNGYFYSGKITRDVGAGKYKLLFDDGY) are interaction with dimethylated histone H4. Lys-1563 is covalently cross-linked (Glycyl lysine isopeptide (Lys-Gly) (interchain with G-Cter in SUMO1); alternate). Residue Lys-1563 forms a Glycyl lysine isopeptide (Lys-Gly) (interchain with G-Cter in SUMO2); alternate linkage. The short motif at 1604–1631 (PYEAVTPLTKAADISLDNLVEGKRKRRS) is the UDR element. Phosphothreonine is present on Thr-1609. Ser-1618, Ser-1631, and Ser-1635 each carry phosphoserine. Disordered regions lie at residues 1622–1719 (LVEG…EEQR) and 1745–1768 (LASRSKLPDGPTGSSEEEEEFLEI). Residues 1634-1650 (SSPATPTASSSSSTTPT) are compositionally biased toward low complexity. 2 positions are modified to phosphothreonine: Thr-1638 and Thr-1648. Phosphoserine is present on residues Ser-1656, Ser-1673, and Ser-1678. Lys-1685 participates in a covalent cross-link: Glycyl lysine isopeptide (Lys-Gly) (interchain with G-Cter in ubiquitin). 3 positions are modified to phosphoserine: Ser-1701, Ser-1759, and Ser-1778. 2 BRCT domains span residues 1724–1848 (LNKT…NYLL) and 1864–1964 (PREN…QHPK).

In terms of assembly, homoligomer. Interacts with p53/TP53 (via the central domain). Interacts with DCLRE1C. Interacts with histone H2AX and this requires phosphorylation of H2AX on 'Ser-139'. Interacts with histone H4 that has been dimethylated at 'Lys-20' (H4K20me2). Has low affinity for histone H4 containing monomethylated 'Lys-20' (H4K20me1). Does not bind histone H4 containing unmethylated or trimethylated 'Lys-20' (H4K20me3). Has low affinity for histone H3 that has been dimethylated on 'Lys-79'. Has very low affinity for histone H3 that has been monomethylated on 'Lys-79' (in vitro). Does not bind unmethylated histone H3. Interacts with histone H2A monoubiquitinated at 'Lys-15' (H2AK15Ub). Interacts with PWWP3A/EXPAND1. Interacts with CHEK2; modulates CHEK2 phosphorylation at 'Thr-68' in response to infrared. Interacts with MSL1; this interaction may be required for MSL1 DNA repair activity, but not for histone acetyltransferase activity. Interacts (when phosphorylated by ATM) with RIF1. Interacts (via the Tudor-like domain) with NUDT16L1/TIRR; interaction masks the Tudor-like domain and prevents recruitment to chromatin. Interacts with PAXIP1. Interacts with SHLD2. Interacts (when phosphorylated) with TOPBP1. Interacts with GFI1; promoting methylation by PRMT1. Interacts with (phosphorylated) DYNLL1; specifically binds DYNLL1 phosphorylated at 'Ser-88' and promotes its recruitment to double stand breaks (DSBs). As to quaternary structure, (Microbial infection) Interacts (via C-terminus) with Epstein-Barr virus lytic switch protein BZLF1 (via C-terminus); this interaction is involved in the activation of the viral lytic cycle. Post-translationally, asymmetrically dimethylated on Arg residues by PRMT1. Methylation is required for DNA binding. Phosphorylated at basal level in the absence of DNA damage. Phosphorylated by ATM in response to DNA damage: phosphorylation at different sites promotes interaction with different set of proteins: phosphorylation at the N-terminus by ATM (residues from 6-178) promotes interaction with PAXIP1 and non-homologous end joining (NHEJ) of dysfunctional telomeres. Phosphorylation by ATM at residues that are located more C-terminus (residues 300-650) leads to promote interaction with RIF1. Interaction with RIF1 leads to disrupt interaction with NUDT16L1/TIRR. Phosphorylation at Thr-1609 and Ser-1618 in the UDR motif blocks interaction with H2AK15ub. Dephosphorylated by PPP4C. Hyperphosphorylation during mitosis correlates with its exclusion from chromatin and DNA lesions. Hyperphosphorylated in an ATR-dependent manner in response to DNA damage induced by UV irradiation. Dephosphorylated by PPP5C. Phosphorylation at Ser-366 and Thr-670 promotes interaction with TOPBP1. Phosphorylated by VRK1. In terms of processing, monoubiquitinated at Lys-1685 by MSL2 is reponse to DNA damage, leading to its stabilization.

The protein resides in the nucleus. It localises to the chromosome. Its subcellular location is the centromere. It is found in the kinetochore. Functionally, double-strand break (DSB) repair protein involved in response to DNA damage, telomere dynamics and class-switch recombination (CSR) during antibody genesis. Plays a key role in the repair of double-strand DNA breaks (DSBs) in response to DNA damage by promoting non-homologous end joining (NHEJ)-mediated repair of DSBs and specifically counteracting the function of the homologous recombination (HR) repair protein BRCA1. In response to DSBs, phosphorylation by ATM promotes interaction with RIF1 and dissociation from NUDT16L1/TIRR, leading to recruitment to DSBs sites. Recruited to DSBs sites by recognizing and binding histone H2A monoubiquitinated at 'Lys-15' (H2AK15Ub) and histone H4 dimethylated at 'Lys-20' (H4K20me2), two histone marks that are present at DSBs sites. Required for immunoglobulin class-switch recombination (CSR) during antibody genesis, a process that involves the generation of DNA DSBs. Participates in the repair and the orientation of the broken DNA ends during CSR. In contrast, it is not required for classic NHEJ and V(D)J recombination. Promotes NHEJ of dysfunctional telomeres via interaction with PAXIP1. In Homo sapiens (Human), this protein is TP53-binding protein 1.